Consider the following 302-residue polypeptide: Sulfate adenylyltransferase subunit 2 (302 aa).

The disordered stretch occupies residues 280–302 (RQGRVIDHDSSGSMEKKKREGYF).

It belongs to the PAPS reductase family. CysD subfamily. As to quaternary structure, heterodimer composed of CysD, the smaller subunit, and CysN.

It carries out the reaction sulfate + ATP + H(+) = adenosine 5'-phosphosulfate + diphosphate. The protein operates within sulfur metabolism; hydrogen sulfide biosynthesis; sulfite from sulfate: step 1/3. With CysN forms the ATP sulfurylase (ATPS) that catalyzes the adenylation of sulfate producing adenosine 5'-phosphosulfate (APS) and diphosphate, the first enzymatic step in sulfur assimilation pathway. APS synthesis involves the formation of a high-energy phosphoric-sulfuric acid anhydride bond driven by GTP hydrolysis by CysN coupled to ATP hydrolysis by CysD. This is Sulfate adenylyltransferase subunit 2 from Shewanella amazonensis (strain ATCC BAA-1098 / SB2B).